The primary structure comprises 302 residues: 4-hydroxy-tetrahydrodipicolinate synthase (302 aa).

Thr-55 serves as a coordination point for pyruvate. Tyr-144 functions as the Proton donor/acceptor in the catalytic mechanism. Lys-172 (schiff-base intermediate with substrate) is an active-site residue. Pyruvate is bound at residue Val-214.

It belongs to the DapA family. In terms of assembly, homotetramer; dimer of dimers.

The protein resides in the cytoplasm. The enzyme catalyses L-aspartate 4-semialdehyde + pyruvate = (2S,4S)-4-hydroxy-2,3,4,5-tetrahydrodipicolinate + H2O + H(+). It functions in the pathway amino-acid biosynthesis; L-lysine biosynthesis via DAP pathway; (S)-tetrahydrodipicolinate from L-aspartate: step 3/4. In terms of biological role, catalyzes the condensation of (S)-aspartate-beta-semialdehyde [(S)-ASA] and pyruvate to 4-hydroxy-tetrahydrodipicolinate (HTPA). The polypeptide is 4-hydroxy-tetrahydrodipicolinate synthase (Prochlorococcus marinus (strain NATL2A)).